Consider the following 874-residue polypeptide: Alanine--tRNA ligase (874 aa).

Positions 565, 569, 666, and 670 each coordinate Zn(2+).

The protein belongs to the class-II aminoacyl-tRNA synthetase family. Zn(2+) serves as cofactor.

It localises to the cytoplasm. It catalyses the reaction tRNA(Ala) + L-alanine + ATP = L-alanyl-tRNA(Ala) + AMP + diphosphate. In terms of biological role, catalyzes the attachment of alanine to tRNA(Ala) in a two-step reaction: alanine is first activated by ATP to form Ala-AMP and then transferred to the acceptor end of tRNA(Ala). Also edits incorrectly charged Ser-tRNA(Ala) and Gly-tRNA(Ala) via its editing domain. The polypeptide is Alanine--tRNA ligase (Polynucleobacter asymbioticus (strain DSM 18221 / CIP 109841 / QLW-P1DMWA-1) (Polynucleobacter necessarius subsp. asymbioticus)).